The chain runs to 284 residues: Undecaprenyl-diphosphatase (284 aa).

Transmembrane regions (helical) follow at residues 7 to 27, 44 to 64, 90 to 110, 116 to 136, 167 to 187, 197 to 217, 229 to 249, and 259 to 279; these read IILGVIEGITEWLPISSTGHL, EMFDVVIQLGAILSVVVLYFH, LWLKVLIAALPAAIIGLPLND, FYHFVPVAFMLIIYGVAFIVI, VLSLLPGTSRSGATIVGALLV, FTFFLGIPVMFGASFIKILHF, FGVLLVACIVAFGVSMVAIKF, and FTFFGKYRIVLGIILLIYAMF.

The protein belongs to the UppP family.

The protein localises to the cell membrane. The enzyme catalyses di-trans,octa-cis-undecaprenyl diphosphate + H2O = di-trans,octa-cis-undecaprenyl phosphate + phosphate + H(+). Its function is as follows. Catalyzes the dephosphorylation of undecaprenyl diphosphate (UPP). Confers resistance to bacitracin. The protein is Undecaprenyl-diphosphatase of Lactococcus lactis subsp. lactis (strain IL1403) (Streptococcus lactis).